Reading from the N-terminus, the 309-residue chain is Transcription elongation factor S-II (309 aa).

In terms of domain architecture, TFIIS N-terminal spans 5–79 (EVLVHVKNLE…SSWKDAINKN (75 aa)). The interval 78 to 142 (KNKRSRQAQQ…NSKNDGVDTA (65 aa)) is disordered. Over residues 88 to 102 (HHQDHAPGNAEDKTT) the composition is skewed to basic and acidic residues. The span at 103 to 120 (VGESVNGVQQPASSQSDA) shows a compositional bias: polar residues. A Phosphoserine modification is found at Ser-116. A TFIIS central domain is found at 148–264 (LRDQVLKALY…NAQGATIERS (117 aa)). The TFIIS-type zinc-finger motif lies at 267 to 307 (DRFTCGKCKEKKVSYYQLQTRSADEPLTTFCTCEACGNRWK). Residues Cys-271, Cys-274, Cys-299, and Cys-302 each coordinate Zn(2+).

The protein belongs to the TFS-II family.

The protein localises to the nucleus. Its function is as follows. Necessary for efficient RNA polymerase II transcription elongation past template-encoded arresting sites. The arresting sites in DNA have the property of trapping a certain fraction of elongating RNA polymerases that pass through, resulting in locked ternary complexes. Cleavage of the nascent transcript by S-II allows the resumption of elongation from the new 3'-terminus. In terms of biological role, can promote the transfer of one strand of a double-stranded DNA molecule to a homologous single strand and thus may be involved in recombination. This Saccharomyces cerevisiae (strain ATCC 204508 / S288c) (Baker's yeast) protein is Transcription elongation factor S-II (DST1).